The primary structure comprises 86 residues: MKTLLLTLVVVTIVCLDLGYTLTCVTGKSIGGISTEECAAGQKICFKKWTKMGPKLYDVSRGCTATCPKADEYGCVKCCKTDRCNK.

The signal sequence occupies residues 1-21 (MKTLLLTLVVVTIVCLDLGYT). Cystine bridges form between Cys24–Cys45, Cys38–Cys63, Cys67–Cys78, and Cys79–Cys84.

It belongs to the three-finger toxin family. Short-chain subfamily. Aminergic toxin sub-subfamily. In terms of tissue distribution, expressed by the venom gland.

It is found in the secreted. This chain is Synergistic-like venom protein, found in Dendroaspis angusticeps (Eastern green mamba).